Consider the following 723-residue polypeptide: Protein Hook homolog (723 aa).

A Calponin-homology (CH) domain is found at 4–120 (TELCECLVQW…RLLQLILGCA (117 aa)). Coiled coils occupy residues 162-423 (VLPE…MQLQ) and 457-665 (EIKE…IVSA). The disordered stretch occupies residues 682–723 (LANGGPMQGGQSFLARQRQATSRRTTVSTTHPGHARSVNFVN). Over residues 696-711 (ARQRQATSRRTTVSTT) the composition is skewed to low complexity.

This sequence belongs to the hook family. Interacts with microtubules.

It is found in the cytoplasm. It localises to the cytoskeleton. In terms of biological role, may function to promote vesicle trafficking and/or fusion. May act to link a number of membrane-bound organelles to the cytoskeleton. This Branchiostoma floridae (Florida lancelet) protein is Protein Hook homolog.